The following is a 794-amino-acid chain: Alpha-1,3-galactosidase B (794 aa).

A signal peptide spans 1–57 (MEGNLSFSLMEASGRSIFFLIEGIREQSIKNMFSRMFSWSFVVAACLAGLFPAQSQG). 5 PbH1 repeats span residues 468–499 (SEDF…HFSN), 609–631 (YPSV…LFTT), 632–654 (PERV…LLAG), 665–686 (CHEV…YQFT), and 707–728 (HRNV…LFAI).

The protein belongs to the glycosyl hydrolase 110 family. B subfamily.

It carries out the reaction Hydrolysis of terminal, non-reducing branched (1-&gt;3)-alpha-D-galactosidic residues, producing free D-galactose.. The catalysed reaction is Hydrolysis of terminal, non-reducing linear (1-&gt;3)-alpha-D-galactosidic residues, producing free D-galactose.. It catalyses the reaction Hydrolysis of terminal, non-reducing alpha-D-galactose residues in alpha-D-galactosides, including galactose oligosaccharides, galactomannans and galactolipids.. Its function is as follows. Alpha-galactosidase. Removes both branched alpha-1,3-linked galactose residues of blood group B antigens and linear alpha-1,3-linked galactose structures. In Akkermansia muciniphila (strain ATCC BAA-835 / DSM 22959 / JCM 33894 / BCRC 81048 / CCUG 64013 / CIP 107961 / Muc), this protein is Alpha-1,3-galactosidase B (glaB).